A 255-amino-acid chain; its full sequence is tRNA pseudouridine synthase A (255 aa).

Catalysis depends on Asp43, which acts as the Nucleophile. Tyr94 provides a ligand contact to substrate.

Belongs to the tRNA pseudouridine synthase TruA family.

It carries out the reaction uridine(38/39/40) in tRNA = pseudouridine(38/39/40) in tRNA. Functionally, formation of pseudouridine at positions 38, 39 and 40 in the anticodon stem and loop of transfer RNAs. This chain is tRNA pseudouridine synthase A, found in Pyrobaculum neutrophilum (strain DSM 2338 / JCM 9278 / NBRC 100436 / V24Sta) (Thermoproteus neutrophilus).